The primary structure comprises 601 residues: UvrABC system protein C (601 aa).

Positions 17–95 (TLPGVYRMLD…IKALAPRYNI (79 aa)) constitute a GIY-YIG domain. A UVR domain is found at 204-239 (SELINELTRRMTAAAEAMAFEQAAELRDQIQALARV).

It belongs to the UvrC family. As to quaternary structure, interacts with UvrB in an incision complex.

Its subcellular location is the cytoplasm. In terms of biological role, the UvrABC repair system catalyzes the recognition and processing of DNA lesions. UvrC both incises the 5' and 3' sides of the lesion. The N-terminal half is responsible for the 3' incision and the C-terminal half is responsible for the 5' incision. This is UvrABC system protein C from Chromobacterium violaceum (strain ATCC 12472 / DSM 30191 / JCM 1249 / CCUG 213 / NBRC 12614 / NCIMB 9131 / NCTC 9757 / MK).